A 361-amino-acid chain; its full sequence is UDP-N-acetylglucosamine--N-acetylmuramyl-(pentapeptide) pyrophosphoryl-undecaprenol N-acetylglucosamine transferase (361 aa).

UDP-N-acetyl-alpha-D-glucosamine contacts are provided by residues 11-13 (TGG), N124, R164, S192, and Q295.

The protein belongs to the glycosyltransferase 28 family. MurG subfamily.

It localises to the cell membrane. It catalyses the reaction di-trans,octa-cis-undecaprenyl diphospho-N-acetyl-alpha-D-muramoyl-L-alanyl-D-glutamyl-meso-2,6-diaminopimeloyl-D-alanyl-D-alanine + UDP-N-acetyl-alpha-D-glucosamine = di-trans,octa-cis-undecaprenyl diphospho-[N-acetyl-alpha-D-glucosaminyl-(1-&gt;4)]-N-acetyl-alpha-D-muramoyl-L-alanyl-D-glutamyl-meso-2,6-diaminopimeloyl-D-alanyl-D-alanine + UDP + H(+). The protein operates within cell wall biogenesis; peptidoglycan biosynthesis. Functionally, cell wall formation. Catalyzes the transfer of a GlcNAc subunit on undecaprenyl-pyrophosphoryl-MurNAc-pentapeptide (lipid intermediate I) to form undecaprenyl-pyrophosphoryl-MurNAc-(pentapeptide)GlcNAc (lipid intermediate II). The polypeptide is UDP-N-acetylglucosamine--N-acetylmuramyl-(pentapeptide) pyrophosphoryl-undecaprenol N-acetylglucosamine transferase (Deinococcus geothermalis (strain DSM 11300 / CIP 105573 / AG-3a)).